The sequence spans 162 residues: Transcription antitermination protein NusB (162 aa).

This sequence belongs to the NusB family.

Functionally, involved in transcription antitermination. Required for transcription of ribosomal RNA (rRNA) genes. Binds specifically to the boxA antiterminator sequence of the ribosomal RNA (rrn) operons. In Mycobacterium sp. (strain JLS), this protein is Transcription antitermination protein NusB.